A 498-amino-acid chain; its full sequence is Glycerol kinase (498 aa).

Thr12 contributes to the ADP binding site. ATP-binding residues include Thr12, Thr13, and Ser14. Residue Thr12 coordinates sn-glycerol 3-phosphate. Position 16 (Arg16) interacts with ADP. Sn-glycerol 3-phosphate contacts are provided by Arg82, Glu83, Tyr134, and Asp243. Glycerol is bound by residues Arg82, Glu83, Tyr134, Asp243, and Gln244. ADP contacts are provided by Thr265 and Gly308. Positions 265, 308, 312, and 411 each coordinate ATP. Gly411 contributes to the ADP binding site.

Belongs to the FGGY kinase family.

It carries out the reaction glycerol + ATP = sn-glycerol 3-phosphate + ADP + H(+). It functions in the pathway polyol metabolism; glycerol degradation via glycerol kinase pathway; sn-glycerol 3-phosphate from glycerol: step 1/1. With respect to regulation, inhibited by fructose 1,6-bisphosphate (FBP). Its function is as follows. Key enzyme in the regulation of glycerol uptake and metabolism. Catalyzes the phosphorylation of glycerol to yield sn-glycerol 3-phosphate. The polypeptide is Glycerol kinase (Brucella canis (strain ATCC 23365 / NCTC 10854 / RM-666)).